The primary structure comprises 822 residues: Stemar-13-ene synthase (822 aa).

Over residues 1-10 (MMLLSSSYSG) the composition is skewed to polar residues. The tract at residues 1-29 (MMLLSSSYSGGQFPGVSPLGTRPKRSTTV) is disordered. Mg(2+) contacts are provided by D553, D557, N698, T702, and E706. A DDXXD motif motif is present at residues 553-557 (DDLFD).

This sequence belongs to the terpene synthase family. Requires Mg(2+) as cofactor.

The enzyme catalyses 9alpha-copalyl diphosphate = stemar-13-ene + diphosphate. In terms of biological role, catalyzes the conversion of syn-copalyl diphosphate to the phytoalexin precursor stemarene. The polypeptide is Stemar-13-ene synthase (KSL8) (Oryza sativa subsp. japonica (Rice)).